The chain runs to 274 residues: Hydroxyethylthiazole kinase (274 aa).

Substrate is bound at residue Met49. ATP is bound by residues Arg125 and Thr173. Gly200 provides a ligand contact to substrate.

The protein belongs to the Thz kinase family. The cofactor is Mg(2+).

It carries out the reaction 5-(2-hydroxyethyl)-4-methylthiazole + ATP = 4-methyl-5-(2-phosphooxyethyl)-thiazole + ADP + H(+). It functions in the pathway cofactor biosynthesis; thiamine diphosphate biosynthesis; 4-methyl-5-(2-phosphoethyl)-thiazole from 5-(2-hydroxyethyl)-4-methylthiazole: step 1/1. Functionally, catalyzes the phosphorylation of the hydroxyl group of 4-methyl-5-beta-hydroxyethylthiazole (THZ). This chain is Hydroxyethylthiazole kinase, found in Desulfosudis oleivorans (strain DSM 6200 / JCM 39069 / Hxd3) (Desulfococcus oleovorans).